The following is a 206-amino-acid chain: MSEFNETKFSNNGTFFETEEPIVETKSISVYTPLIYVFILVVSLVMFASSYRKKQAKKISEQPSIFDENDAHDLYFQIKEMSENEKIHEKVLKAALLNRGAESVRRSLKLKELAPQINLLYKNGSIGEDYWKRFETEVKLIELEFKDTLQEAERLQPGWVQLFVMVCKEICFNQALSRRYQSILKRKEVCIKEWELKINNDGRLVN.

The Lumenal portion of the chain corresponds to M1 to S27. 2 N-linked (GlcNAc...) asparagine glycosylation sites follow: N5 and N12. The helical; Signal-anchor for type II membrane protein transmembrane segment at I28–A48 threads the bilayer. Residues S49 to N206 are Cytoplasmic-facing.

This sequence to S.pombe SpBC409.21. In terms of assembly, component of the heterotetrameric Sec62/63complex composed of SEC62, SEC63, SEC66 and SEC72. The Sec62/63 complex associates with the Sec61 complex to form the Sec complex. Part of a complex consisting of KAR2, SEC63, SEC66 and SEC72.

The protein localises to the endoplasmic reticulum membrane. Acts as a component of the Sec62/63 complex which is involved in SRP-independent post-translational translocation across the endoplasmic reticulum (ER) and functions together with the Sec61 complex and KAR2 in a channel-forming translocon complex. A cycle of assembly and disassembly of Sec62/63 complex from SEC61 may govern the activity of the translocon. SEC66 is required to attach or retain SEC72 in the SEC63 complex. It is essential for growth at elevated temperatures. This chain is Translocation protein SEC66 (SEC66), found in Saccharomyces cerevisiae (strain ATCC 204508 / S288c) (Baker's yeast).